A 130-amino-acid chain; its full sequence is UPF0102 protein RPA0323 (130 aa).

This sequence belongs to the UPF0102 family.

This chain is UPF0102 protein RPA0323, found in Rhodopseudomonas palustris (strain ATCC BAA-98 / CGA009).